The following is a 366-amino-acid chain: Ribosomal RNA large subunit methyltransferase M (366 aa).

S-adenosyl-L-methionine is bound by residues Ser188, 221–224 (CPGG), Asp240, Asp260, and Asp277. Catalysis depends on Lys306, which acts as the Proton acceptor.

This sequence belongs to the class I-like SAM-binding methyltransferase superfamily. RNA methyltransferase RlmE family. RlmM subfamily. In terms of assembly, monomer.

The protein resides in the cytoplasm. The catalysed reaction is cytidine(2498) in 23S rRNA + S-adenosyl-L-methionine = 2'-O-methylcytidine(2498) in 23S rRNA + S-adenosyl-L-homocysteine + H(+). Functionally, catalyzes the 2'-O-methylation at nucleotide C2498 in 23S rRNA. In Salmonella gallinarum (strain 287/91 / NCTC 13346), this protein is Ribosomal RNA large subunit methyltransferase M.